Here is a 945-residue protein sequence, read N- to C-terminus: Isoleucine--tRNA ligase (945 aa).

Positions 66–76 (PYANGDIHLGH) match the 'HIGH' region motif. E581 contacts L-isoleucyl-5'-AMP. Positions 622–626 (KMSKS) match the 'KMSKS' region motif. ATP is bound at residue K625. Zn(2+) is bound by residues C908, C911, C928, and C931.

The protein belongs to the class-I aminoacyl-tRNA synthetase family. IleS type 1 subfamily. As to quaternary structure, monomer. Zn(2+) serves as cofactor.

The protein localises to the cytoplasm. The enzyme catalyses tRNA(Ile) + L-isoleucine + ATP = L-isoleucyl-tRNA(Ile) + AMP + diphosphate. Functionally, catalyzes the attachment of isoleucine to tRNA(Ile). As IleRS can inadvertently accommodate and process structurally similar amino acids such as valine, to avoid such errors it has two additional distinct tRNA(Ile)-dependent editing activities. One activity is designated as 'pretransfer' editing and involves the hydrolysis of activated Val-AMP. The other activity is designated 'posttransfer' editing and involves deacylation of mischarged Val-tRNA(Ile). The polypeptide is Isoleucine--tRNA ligase (Burkholderia ambifaria (strain ATCC BAA-244 / DSM 16087 / CCUG 44356 / LMG 19182 / AMMD) (Burkholderia cepacia (strain AMMD))).